An 863-amino-acid chain; its full sequence is Protein translocase subunit SecA (863 aa).

Residues Gln-88, 106–110 (GEGKT), and Asp-507 each bind ATP. The segment at 806–863 (KSHEQNEQFLSNTTESGVNENGEAQITKVPRNSPCPCGSGKKYKECHGKSGPKKGILA) is disordered. The segment covering 812–829 (EQFLSNTTESGVNENGEA) has biased composition (polar residues). 4 residues coordinate Zn(2+): Cys-840, Cys-842, Cys-851, and His-852.

It belongs to the SecA family. Monomer and homodimer. Part of the essential Sec protein translocation apparatus which comprises SecA, SecYEG and auxiliary proteins SecDF-YajC and YidC. Requires Zn(2+) as cofactor.

Its subcellular location is the cell inner membrane. The protein resides in the cytoplasm. It catalyses the reaction ATP + H2O + cellular proteinSide 1 = ADP + phosphate + cellular proteinSide 2.. Its function is as follows. Part of the Sec protein translocase complex. Interacts with the SecYEG preprotein conducting channel. Has a central role in coupling the hydrolysis of ATP to the transfer of proteins into and across the cell membrane, serving as an ATP-driven molecular motor driving the stepwise translocation of polypeptide chains across the membrane. This is Protein translocase subunit SecA from Campylobacter lari (strain RM2100 / D67 / ATCC BAA-1060).